We begin with the raw amino-acid sequence, 240 residues long: Adenylate dimethylallyltransferase (240 aa).

This sequence belongs to the isopentenyl transferase family.

The catalysed reaction is dimethylallyl diphosphate + AMP = N(6)-(dimethylallyl)adenosine 5'-phosphate + diphosphate. Its function is as follows. Transfers dimethylallyl groups to AMP as part of the biosynthesis of cytokinin phytohormones. The chain is Adenylate dimethylallyltransferase (izt) from Agrobacterium tumefaciens (strain Ach5).